The chain runs to 350 residues: Biotin synthase (350 aa).

The region spanning asparagine 41 to arginine 268 is the Radical SAM core domain. 3 residues coordinate [4Fe-4S] cluster: cysteine 56, cysteine 60, and cysteine 63. [2Fe-2S] cluster-binding residues include cysteine 100, cysteine 131, cysteine 191, and arginine 263.

Belongs to the radical SAM superfamily. Biotin synthase family. In terms of assembly, homodimer. It depends on [4Fe-4S] cluster as a cofactor. Requires [2Fe-2S] cluster as cofactor.

The enzyme catalyses (4R,5S)-dethiobiotin + (sulfur carrier)-SH + 2 reduced [2Fe-2S]-[ferredoxin] + 2 S-adenosyl-L-methionine = (sulfur carrier)-H + biotin + 2 5'-deoxyadenosine + 2 L-methionine + 2 oxidized [2Fe-2S]-[ferredoxin]. Its pathway is cofactor biosynthesis; biotin biosynthesis; biotin from 7,8-diaminononanoate: step 2/2. Catalyzes the conversion of dethiobiotin (DTB) to biotin by the insertion of a sulfur atom into dethiobiotin via a radical-based mechanism. This chain is Biotin synthase, found in Shewanella pealeana (strain ATCC 700345 / ANG-SQ1).